Here is a 955-residue protein sequence, read N- to C-terminus: Glycine dehydrogenase (decarboxylating) (955 aa).

Position 702 is an N6-(pyridoxal phosphate)lysine (lysine 702).

It belongs to the GcvP family. In terms of assembly, the glycine cleavage system is composed of four proteins: P, T, L and H. The cofactor is pyridoxal 5'-phosphate.

It carries out the reaction N(6)-[(R)-lipoyl]-L-lysyl-[glycine-cleavage complex H protein] + glycine + H(+) = N(6)-[(R)-S(8)-aminomethyldihydrolipoyl]-L-lysyl-[glycine-cleavage complex H protein] + CO2. Its function is as follows. The glycine cleavage system catalyzes the degradation of glycine. The P protein binds the alpha-amino group of glycine through its pyridoxal phosphate cofactor; CO(2) is released and the remaining methylamine moiety is then transferred to the lipoamide cofactor of the H protein. The chain is Glycine dehydrogenase (decarboxylating) from Stenotrophomonas maltophilia (strain K279a).